Consider the following 602-residue polypeptide: MQSRSTVIYIRFVLWFLLLWVLFEKSHTEEDIIITTKNGKVRGMHLPVLGGTVTAFLGIPYAQPPLGRLRFKKPQSLTKWPDIWNATKYANSCYQNTDQSFPGFLGSEMWNPNTDLSEDCLYLNVWIPTPKPKNATVMIWIYGGSFQTGTSSLHVYDGKFLARVERVIVVSMNYRVGALGFLALPGNPEAPGNVGLFDQQLALQWVQKNIAAFGGNPKSVTLFGESAGAASVSLHLLSPESHPLFTRAILQSGSSNAPWAVTSRYEARNRTLTLAKFIGCSRENDTEIIKCLRNKDPQEILRHEVFVVPYGTLLSVNFGPTVDGDFLTDMPDTLLQLGQFKKTQILVGVNKDEGTAFLVYGAPGFSKDNNSIITRKEFQEGLKIFFPGVSEFGKESILFHYMDWLDDQRAEKYREALDDVVGDYNIICPALEFTKKFSDMGNNAFFYYFEHRSSKLPWPEWMGVMHGYEIEFVFGLPLERRVNYTKAEEIFSRSIMKRWANFAKYGNPNGTQNNSTRWPVFKSNEQKYFTLNTESPKVNTKLRAQQCRFWTLFFPKVLEITGNIDEVEREWKAGFHRWNNYMMDWKNQFNDYTSKKESCAGL.

An N-terminal signal peptide occupies residues 1-28 (MQSRSTVIYIRFVLWFLLLWVLFEKSHT). 2 N-linked (GlcNAc...) asparagine glycosylation sites follow: Asn-85 and Asn-134. 144-145 (GS) is a binding site for substrate. The active-site Acyl-ester intermediate is the Ser-226. At Ser-226 the chain carries Phosphoserine. Asn-269 and Asn-284 each carry an N-linked (GlcNAc...) asparagine glycan. The active-site Charge relay system is Glu-353. The N-linked (GlcNAc...) asparagine glycan is linked to Asn-369. The active-site Charge relay system is His-466. N-linked (GlcNAc...) asparagine glycosylation is found at Asn-483, Asn-509, Asn-513, and Asn-514.

Belongs to the type-B carboxylesterase/lipase family. As to quaternary structure, homotetramer; disulfide-linked. Dimer of dimers. Present in most cells except erythrocytes.

The protein resides in the secreted. The enzyme catalyses an acylcholine + H2O = a carboxylate + choline + H(+). Esterase with broad substrate specificity. Contributes to the inactivation of the neurotransmitter acetylcholine. Can degrade neurotoxic organophosphate esters. The sequence is that of Cholinesterase (BCHE) from Bos taurus (Bovine).